Here is a 267-residue protein sequence, read N- to C-terminus: GTP cyclohydrolase FolE2 (267 aa).

Belongs to the GTP cyclohydrolase IV family.

The enzyme catalyses GTP + H2O = 7,8-dihydroneopterin 3'-triphosphate + formate + H(+). It functions in the pathway cofactor biosynthesis; 7,8-dihydroneopterin triphosphate biosynthesis; 7,8-dihydroneopterin triphosphate from GTP: step 1/1. Functionally, converts GTP to 7,8-dihydroneopterin triphosphate. The protein is GTP cyclohydrolase FolE2 of Citrifermentans bemidjiense (strain ATCC BAA-1014 / DSM 16622 / JCM 12645 / Bem) (Geobacter bemidjiensis).